Here is a 180-residue protein sequence, read N- to C-terminus: MSRIGKLPIKIADSVKVDIKDNFITVEGKRGKLSQEINSSIRVKIEDNNIIVERAFNNKQTRAFHGLYRSLIFNMVKGVSDGFSKSLTINGIGYRVEQQGNSLFFNLGYSTQFEYVIPEGINIRLDGNTKIAVEGIDKCRVGQVAAEIRSLKVPEPYKGKGIKYDNEVIRRKVGKSGVKK.

This sequence belongs to the universal ribosomal protein uL6 family. As to quaternary structure, part of the 50S ribosomal subunit.

In terms of biological role, this protein binds to the 23S rRNA, and is important in its secondary structure. It is located near the subunit interface in the base of the L7/L12 stalk, and near the tRNA binding site of the peptidyltransferase center. The chain is Large ribosomal subunit protein uL6 from Borrelia recurrentis (strain A1).